A 428-amino-acid chain; its full sequence is Cell division protein FtsZ (428 aa).

GTP-binding positions include 73–77 (GGGGN), 160–162 (GTG), Glu191, Arg195, and Asp239. The tract at residues 378 to 428 (NAANARVVSAPPKRTPTQTPLTNSPAPTPEPKEKSGLDIPDFLQRRRPPKN) is disordered. Polar residues predominate over residues 392–402 (TPTQTPLTNSP).

Belongs to the FtsZ family. In terms of assembly, homodimer. Polymerizes to form a dynamic ring structure in a strictly GTP-dependent manner. Interacts directly with several other division proteins.

Its subcellular location is the cytoplasm. In terms of biological role, essential cell division protein that forms a contractile ring structure (Z ring) at the future cell division site. The regulation of the ring assembly controls the timing and the location of cell division. One of the functions of the FtsZ ring is to recruit other cell division proteins to the septum to produce a new cell wall between the dividing cells. Binds GTP and shows GTPase activity. The chain is Cell division protein FtsZ from Nostoc sp. (strain PCC 7120 / SAG 25.82 / UTEX 2576).